The following is a 74-amino-acid chain: Protein sok (74 aa).

The tract at residues 26–45 (TQHGNKPPSRHEAESLKRRA) is disordered.

The sequence is that of Protein sok (sok) from Escherichia coli.